A 240-amino-acid chain; its full sequence is Ribonuclease 3 (240 aa).

Residues 9-141 enclose the RNase III domain; the sequence is VEEFQKKTGI…LLAAIYLDQG (133 aa). Glu-54 contacts Mg(2+). The active site involves Asp-58. 2 residues coordinate Mg(2+): Asp-127 and Glu-130. Glu-130 is a catalytic residue. The region spanning 168 to 237 is the DRBM domain; sequence DYKTALQEIV…ARIAYEKLLK (70 aa).

The protein belongs to the ribonuclease III family. As to quaternary structure, homodimer. The cofactor is Mg(2+).

The protein resides in the cytoplasm. It carries out the reaction Endonucleolytic cleavage to 5'-phosphomonoester.. Digests double-stranded RNA. Involved in the processing of primary rRNA transcript to yield the immediate precursors to the large and small rRNAs (23S and 16S). Processes some mRNAs, and tRNAs when they are encoded in the rRNA operon. Processes pre-crRNA and tracrRNA of type II CRISPR loci if present in the organism. The protein is Ribonuclease 3 of Thermotoga sp. (strain RQ2).